The following is a 419-amino-acid chain: Ribosome biogenesis protein WDR12 homolog (419 aa).

Residues 10–91 are ubiquitin-like (UBL) domain; it reads VQVHLKTKQE…EDAIEIEYVE (82 aa). WD repeat units lie at residues 103–141, 142–184, 191–230, 249–287, 289–328, 334–374, and 378–416; these read LHDDWVSAVKASGKWILTGCYDNTLNIWTNKGKHILTIP, GHTA…NTVE, GHERGVDSVSVSPDGQRFATGSWDTMLKVWSAELEDAGEG, GHRESISAVQWMDASTLLTGSWDHTLKVWDLSLEGIKAE, STNKSIFDASYSKLNHLILTASADKNLRLYDSRTNQGSVV, GHNA…APLY, and GHGEKVLDIDWTNPKYIVSGGSDNTVRVFKSRKALVENM.

This sequence belongs to the WD repeat WDR12/YTM1 family.

The protein resides in the nucleus. It localises to the nucleolus. The protein localises to the nucleoplasm. Required for maturation of ribosomal RNAs and formation of the large ribosomal subunit. The chain is Ribosome biogenesis protein WDR12 homolog from Drosophila persimilis (Fruit fly).